Here is a 496-residue protein sequence, read N- to C-terminus: Probable cytosol aminopeptidase (496 aa).

Residues Lys-261 and Asp-266 each contribute to the Mn(2+) site. Residue Lys-273 is part of the active site. Residues Asp-284, Asp-343, and Glu-345 each coordinate Mn(2+). Arg-347 is a catalytic residue.

This sequence belongs to the peptidase M17 family. It depends on Mn(2+) as a cofactor.

It localises to the cytoplasm. It carries out the reaction Release of an N-terminal amino acid, Xaa-|-Yaa-, in which Xaa is preferably Leu, but may be other amino acids including Pro although not Arg or Lys, and Yaa may be Pro. Amino acid amides and methyl esters are also readily hydrolyzed, but rates on arylamides are exceedingly low.. The catalysed reaction is Release of an N-terminal amino acid, preferentially leucine, but not glutamic or aspartic acids.. Presumably involved in the processing and regular turnover of intracellular proteins. Catalyzes the removal of unsubstituted N-terminal amino acids from various peptides. The chain is Probable cytosol aminopeptidase from Bacillus licheniformis (strain ATCC 14580 / DSM 13 / JCM 2505 / CCUG 7422 / NBRC 12200 / NCIMB 9375 / NCTC 10341 / NRRL NRS-1264 / Gibson 46).